The chain runs to 386 residues: Protein phosphatase methylesterase 1 (386 aa).

The segment at 1 to 38 (MSALEKSMHLGRLPSRPPLPGSGGSQSGAKMRMGPGRK) is disordered. The residue at position 15 (serine 15) is a Phosphoserine. The residue at position 16 (arginine 16) is an Asymmetric dimethylarginine; alternate. An Omega-N-methylarginine; alternate modification is found at arginine 16. The active site involves serine 156. A compositionally biased stretch (acidic residues) spans 255–265 (IEEEEEDEEGS). The tract at residues 255 to 280 (IEEEEEDEEGSESVNKRKKEDDMETK) is disordered. Positions 268-280 (VNKRKKEDDMETK) are enriched in basic and acidic residues. Histidine 349 is an active-site residue.

Belongs to the AB hydrolase superfamily. As to quaternary structure, binds PPP2CA and PPP2CB. Phosphorylated by SIK1 following increases in intracellular sodium, leading to dissociation from the protein phosphatase 2A (PP2A) complex and subsequent dephosphorylation of sodium/potassium-transporting ATPase ATP1A1.

The enzyme catalyses [phosphatase 2A protein]-C-terminal L-leucine methyl ester + H2O = [phosphatase 2A protein]-C-terminal L-leucine + methanol + H(+). In terms of biological role, demethylates proteins that have been reversibly carboxymethylated. Demethylates PPP2CB (in vitro) and PPP2CA. Binding to PPP2CA displaces the manganese ion and inactivates the enzyme. The chain is Protein phosphatase methylesterase 1 (Ppme1) from Rattus norvegicus (Rat).